A 203-amino-acid chain; its full sequence is Adenylyl-sulfate kinase (203 aa).

35–42 contacts ATP; sequence GLSGSGKS. Residue S109 is the Phosphoserine intermediate of the active site.

The protein belongs to the APS kinase family.

It catalyses the reaction adenosine 5'-phosphosulfate + ATP = 3'-phosphoadenylyl sulfate + ADP + H(+). The protein operates within sulfur metabolism; hydrogen sulfide biosynthesis; sulfite from sulfate: step 2/3. Functionally, catalyzes the synthesis of activated sulfate. The sequence is that of Adenylyl-sulfate kinase from Geotalea daltonii (strain DSM 22248 / JCM 15807 / FRC-32) (Geobacter daltonii).